A 593-amino-acid chain; its full sequence is MAYDYALVHLKYTIPLAALLTVIAYPIFHRIHFLQIGSLIVVSFLATLPWDSYLIRSNIWTYPPDAIIGPRLYGIPIEELFFFVIQTYITSLFYILLSKPLFHPLYLSTQRNPPQRIARGKVIGQGILVALTLYGVHQIRTGGPGTYLGLILAWAFPFALLTFTVAGRFILTLPLTSTVVPIIIPTVYLWLVDELALGRGTWAIESGTKLGWCLFGVLDIEEATFFLATNILIVFGMAVFDQYLAIIFAFPHLFPKVPRSPTPLMLVQSRFSNTKQYDLERIAGLSDAVTRLKAKSRSFYLANSLFTGRLRIDLILLYSFCRLADDLVDDSTSRTEVKSWTTKLYKFLDLHYKSDVKANKARINDYIDEAFPPEAKSALKYLPATILPSQPLYQLIEGFELDSQFSFHDSSESAKYPIVDEDKLNYYGQCVAGTVGELCVALIIEHCEPEMPDERKKMLMSVSRTMGVALQYVNIARDIVVDAEMGRVYLPTTWLKEEGLTPEDVVAHPRGKHVENLRRRLLSEAFKLYDEARPKMNGIPKEARGPMIGAVETYMEIGRVLRELEGGVELERGKATVPGGRRLKTVLKALFSA.

The segment at 1–242 is lycopene beta-cyclase; sequence MAYDYALVHL…IVFGMAVFDQ (242 aa). The next 7 helical transmembrane spans lie at 8–28, 31–51, 77–97, 117–136, 147–167, 169–189, and 231–251; these read VHLK…YPIF, IHFL…LPWD, IEEL…YILL, IARG…LYGV, YLGL…TVAG, FILT…TVYL, and ILIV…FAFP. A phytoene synthase region spans residues 249–593; it reads AFPHLFPKVP…KTVLKALFSA (345 aa).

It in the N-terminal section; belongs to the lycopene beta-cyclase family. In the C-terminal section; belongs to the phytoene/squalene synthase family.

The protein localises to the membrane. The enzyme catalyses all-trans-lycopene = gamma-carotene. It carries out the reaction gamma-carotene = all-trans-beta-carotene. The catalysed reaction is 2 (2E,6E,10E)-geranylgeranyl diphosphate = 15-cis-phytoene + 2 diphosphate. The protein operates within carotenoid biosynthesis; beta-carotene biosynthesis. Its pathway is carotenoid biosynthesis; phytoene biosynthesis; all-trans-phytoene from geranylgeranyl diphosphate: step 1/1. Functionally, bifunctional enzyme that catalyzes the reactions from geranylgeranyl diphosphate to phytoene (phytoene synthase) and lycopene to beta-carotene via the intermediate gamma-carotene (lycopene cyclase). This Podospora anserina (strain S / ATCC MYA-4624 / DSM 980 / FGSC 10383) (Pleurage anserina) protein is Bifunctional lycopene cyclase/phytoene synthase.